The chain runs to 449 residues: MGSDVRDLNALLPAVSSLGGGGGGCGLPVSGARQWAPVLDFAPPGASAYGSLGGPAPPPAPPPPPPPPHSFIKQEPSWGGAEPHEEQCLSAFTLHFSGQFTGTAGACRYGPFGPPPPSQASSGQARMFPNAPYLPSCLESQPTIRNQGYSTVTFDGAPSYGHTPSHHAAQFPNHSFKHEDPMGQQGSLGEQQYSVPPPVYGCHTPTDSCTGSQALLLRTPYSSDNLYQMTSQLECMTWNQMNLGATLKGMAAGSSSSVKWTEGQSNHGIGYESENHTAPILCGAQYRIHTHGVFRGIQDVRRVSGVAPTLVRSASETSEKRPFMCAYPGCNKRYFKLSHLQMHSRKHTGEKPYQCDFKDCERRFSRSDQLKRHQRRHTGVKPFQCKTCQRKFSRSDHLKTHTRTHTGKTSEKPFSCRWHSCQKKFARSDELVRHHNMHQRNMTKLHVAL.

Residues Y49 to H84 form a disordered region. The span at P55 to H69 shows a compositional bias: pro residues. Glycyl lysine isopeptide (Lys-Gly) (interchain with G-Cter in SUMO) cross-links involve residues K73 and K177. The short motif at M236–G244 is the 9aaTAD element. 3 C2H2-type zinc fingers span residues F323–H347, Y353–H377, and F383–H405. Important for interaction with target DNA stretches follow at residues S367–K381 and S393–H401. The KTS motif signature appears at K408–S410. The C2H2-type 4 zinc-finger motif lies at F414–H438. A Glycyl lysine isopeptide (Lys-Gly) (interchain with G-Cter in SUMO2) cross-link involves residue K444.

This sequence belongs to the EGR C2H2-type zinc-finger protein family. In terms of assembly, interacts with ZNF224 via the zinc-finger region. Interacts with WTAP, AMER1 and SRY. Interacts with RBM4. Homodimer. Interacts with WTIP. Interacts with actively translating polysomes. Detected in nuclear ribonucleoprotein (mRNP) particles. Interacts with U2AF2. Interacts with HNRNPU via the zinc-finger region. Isoform 1 and isoform 3 interacts with CITED2. In terms of tissue distribution, detected in neurons of the embryonic dorsal root ganglion and in Sertoli cells of the adult testis (at protein level). Detected in kidney.

It localises to the nucleus speckle. The protein localises to the nucleus. Its subcellular location is the nucleoplasm. It is found in the nucleolus. The protein resides in the cytoplasm. Transcription factor that plays an important role in cellular development and cell survival. Recognizes and binds to the DNA sequence 5'-GCG(T/G)GGGCG-3'. Regulates the expression of numerous target genes, including EPO. Plays an essential role for development of the urogenital system. It has a tumor suppressor as well as an oncogenic role in tumor formation. Function may be isoform-specific: isoforms lacking the KTS motif may act as transcription factors. Isoforms containing the KTS motif may bind mRNA and play a role in mRNA metabolism or splicing. Isoform 1 has lower affinity for DNA, and can bind RNA. The protein is Wilms tumor protein homolog (Wt1) of Mus musculus (Mouse).